A 348-amino-acid polypeptide reads, in one-letter code: Uroporphyrinogen decarboxylase (348 aa).

Residues 27-31 (RQAGR), Phe46, Asp76, Tyr152, Ser207, and His320 contribute to the substrate site.

This sequence belongs to the uroporphyrinogen decarboxylase family. In terms of assembly, homodimer.

Its subcellular location is the cytoplasm. The enzyme catalyses uroporphyrinogen III + 4 H(+) = coproporphyrinogen III + 4 CO2. It functions in the pathway porphyrin-containing compound metabolism; protoporphyrin-IX biosynthesis; coproporphyrinogen-III from 5-aminolevulinate: step 4/4. Catalyzes the decarboxylation of four acetate groups of uroporphyrinogen-III to yield coproporphyrinogen-III. The sequence is that of Uroporphyrinogen decarboxylase from Bacillus mycoides (strain KBAB4) (Bacillus weihenstephanensis).